The chain runs to 42 residues: Lebocin-like anionic peptide 1 (42 aa).

Hemolymph.

It is found in the secreted. In terms of biological role, antimicrobial protein. Has antibacterial activity against the Gram-positive bacteria M.luteus (MIC=22.7 uM) and L.monocytogenes (MIC=90.9 uM). Lacks antibacterial activity against the Gram-positive bacteria B.circulans, S.aureus, and S.lutea, and the Gram-negative bacteria E.coli D31, E.coli ATCC 25922, and S.typhimurium. Has antifungal activity against A.niger (MIC=90.9 uM) and T.harzianum (MIC=90.9 uM), but lacks antifungal activity against S.cerevisiae, P.pastoris, Z.marxianus, C.albicans, C.fructus, and F.oxysporum. The chain is Lebocin-like anionic peptide 1 from Galleria mellonella (Greater wax moth).